Reading from the N-terminus, the 318-residue chain is Transaldolase (318 aa).

Residue lysine 132 is the Schiff-base intermediate with substrate of the active site.

This sequence belongs to the transaldolase family. Type 1 subfamily. In terms of assembly, homodimer.

Its subcellular location is the cytoplasm. It catalyses the reaction D-sedoheptulose 7-phosphate + D-glyceraldehyde 3-phosphate = D-erythrose 4-phosphate + beta-D-fructose 6-phosphate. Its pathway is carbohydrate degradation; pentose phosphate pathway; D-glyceraldehyde 3-phosphate and beta-D-fructose 6-phosphate from D-ribose 5-phosphate and D-xylulose 5-phosphate (non-oxidative stage): step 2/3. In terms of biological role, transaldolase is important for the balance of metabolites in the pentose-phosphate pathway. This is Transaldolase from Shewanella pealeana (strain ATCC 700345 / ANG-SQ1).